We begin with the raw amino-acid sequence, 398 residues long: Spermatogenesis associated 6-like protein (398 aa).

Residues K170–G215 form a disordered region. Phosphoserine is present on residues S269 and S272.

Belongs to the SPATA6 family.

The chain is Spermatogenesis associated 6-like protein (Spata6l) from Rattus norvegicus (Rat).